The following is a 282-amino-acid chain: Kallikrein-11 (282 aa).

A signal peptide spans 1–50 (MQRLRWLRDWKSSGRGLTAAKEPGARSSPLQAMRILQLILLALATGLVGG). A propeptide spans 51 to 53 (ETR) (activation peptide). The region spanning 53–280 (RIIKGFECKP…YVDWIQETMK (228 aa)) is the Peptidase S1 domain. Disulfide bonds link Cys60–Cys195, Cys79–Cys95, Cys167–Cys269, Cys174–Cys241, Cys206–Cys220, and Cys231–Cys256. His94 functions as the Charge relay system in the catalytic mechanism. Residue Asn131 is glycosylated (N-linked (GlcNAc...) asparagine). Catalysis depends on Asp142, which acts as the Charge relay system. Asn197 and Asn213 each carry an N-linked (GlcNAc...) asparagine glycan. Ser235 acts as the Charge relay system in catalysis. Asn242 is a glycosylation site (N-linked (GlcNAc...) asparagine).

Belongs to the peptidase S1 family. Kallikrein subfamily. In terms of processing, about 40% of KLK11 is inactivated by internal cleavage after Arg-188. This proteolytic inactivation may be effected by plasminogen. In terms of tissue distribution, expressed in brain, skin and prostate. Isoform 1 is expressed preferentially in brain. Isoform 2 is expressed in prostate. Present in seminal plasma at concentrations ranging from 2 to 37 microg/mL (at protein level).

It is found in the secreted. The protein localises to the golgi apparatus. Functionally, possible multifunctional protease. Efficiently cleaves 'bz-Phe-Arg-4-methylcoumaryl-7-amide', a kallikrein substrate, and weakly cleaves other substrates for kallikrein and trypsin. Cleaves synthetic peptides after arginine but not lysine residues. This is Kallikrein-11 (KLK11) from Homo sapiens (Human).